A 689-amino-acid polypeptide reads, in one-letter code: Glycine--tRNA ligase beta subunit (689 aa).

The protein belongs to the class-II aminoacyl-tRNA synthetase family. Tetramer of two alpha and two beta subunits.

It localises to the cytoplasm. It catalyses the reaction tRNA(Gly) + glycine + ATP = glycyl-tRNA(Gly) + AMP + diphosphate. This is Glycine--tRNA ligase beta subunit from Shewanella baltica (strain OS195).